Consider the following 432-residue polypeptide: Adenylosuccinate synthetase (432 aa).

GTP is bound by residues 13-19 (GDEGKGK) and 41-43 (GHT). Residue aspartate 14 is the Proton acceptor of the active site. Residues aspartate 14 and glycine 41 each contribute to the Mg(2+) site. Residues 14–17 (DEGK), 39–42 (NAGH), threonine 130, arginine 144, glutamine 225, threonine 240, and arginine 306 each bind IMP. Histidine 42 functions as the Proton donor in the catalytic mechanism. 302 to 308 (TVTGRAR) is a binding site for substrate. Residues arginine 308, 334-336 (KLD), and 416-418 (STG) each bind GTP.

It belongs to the adenylosuccinate synthetase family. Homodimer. It depends on Mg(2+) as a cofactor.

It is found in the cytoplasm. The catalysed reaction is IMP + L-aspartate + GTP = N(6)-(1,2-dicarboxyethyl)-AMP + GDP + phosphate + 2 H(+). Its pathway is purine metabolism; AMP biosynthesis via de novo pathway; AMP from IMP: step 1/2. Functionally, plays an important role in the de novo pathway of purine nucleotide biosynthesis. Catalyzes the first committed step in the biosynthesis of AMP from IMP. The sequence is that of Adenylosuccinate synthetase from Herminiimonas arsenicoxydans.